The sequence spans 221 residues: Veficolin-1 (221 aa).

The N-terminal stretch at 1–25 (MTAWLDFPLALSPLVVVSMKGGSFG) is a signal peptide. The 55-residue stretch at 50 to 104 (QGQAGIPGIPGVPGTNGLPGAKGDLGPQGPPGERGSTGIPGKAGPKGDKGDQGEA) folds into the Collagen-like domain. The tract at residues 54–104 (GIPGIPGVPGTNGLPGAKGDLGPQGPPGERGSTGIPGKAGPKGDKGDQGEA) is disordered. In terms of domain architecture, Fibrinogen C-terminal spans 111 to 221 (QQQEAGAKDC…DFNNSKTFAK (111 aa)). A disulfide bridge connects residues cysteine 120 and cysteine 148.

It belongs to the ficolin lectin family. Veficolin subfamily. In terms of tissue distribution, expressed by the mandibular venom duct.

It is found in the secreted. Initiates complement activation and/or interferes in platelet aggregation and/or blood coagulation. The polypeptide is Veficolin-1 (Varanus komodoensis (Komodo dragon)).